We begin with the raw amino-acid sequence, 319 residues long: Transaldolase (319 aa).

The active-site Schiff-base intermediate with substrate is the Lys126.

This sequence belongs to the transaldolase family. Type 1 subfamily. As to quaternary structure, homodimer.

It localises to the cytoplasm. It carries out the reaction D-sedoheptulose 7-phosphate + D-glyceraldehyde 3-phosphate = D-erythrose 4-phosphate + beta-D-fructose 6-phosphate. It functions in the pathway carbohydrate degradation; pentose phosphate pathway; D-glyceraldehyde 3-phosphate and beta-D-fructose 6-phosphate from D-ribose 5-phosphate and D-xylulose 5-phosphate (non-oxidative stage): step 2/3. Functionally, transaldolase is important for the balance of metabolites in the pentose-phosphate pathway. The sequence is that of Transaldolase from Bordetella petrii (strain ATCC BAA-461 / DSM 12804 / CCUG 43448).